Reading from the N-terminus, the 560-residue chain is Solute carrier family 49 member A3 (560 aa).

Helical transmembrane passes span 30–50 (WVFL…WLSF), 70–90 (WLSL…IWIL), 100–120 (ILGA…CMVV), 125–145 (PFAF…LVIF), 166–186 (LATM…PVLV), 192–212 (IPLM…LSTI), 250–270 (VILA…SALL), 282–302 (GFSG…ALAL), 318–338 (IGLC…QLQG), 341–361 (LALA…GPVA), 379–399 (GMIF…MTAL), and 422–442 (VSLL…AVFF). Positions 451 to 540 (AESGEPPSTR…PGRLAGRVQA (90 aa)) are disordered. Gly residues predominate over residues 466–481 (ADSGPGVDRGGAGRAG).

Belongs to the major facilitator superfamily.

Its subcellular location is the membrane. In Homo sapiens (Human), this protein is Solute carrier family 49 member A3.